An 88-amino-acid chain; its full sequence is Small ribosomal subunit protein bS20 (88 aa).

It belongs to the bacterial ribosomal protein bS20 family.

Binds directly to 16S ribosomal RNA. This chain is Small ribosomal subunit protein bS20, found in Bartonella tribocorum (strain CIP 105476 / IBS 506).